We begin with the raw amino-acid sequence, 288 residues long: 33 kDa chaperonin (288 aa).

Cystine bridges form between cysteine 225/cysteine 227 and cysteine 258/cysteine 261.

It belongs to the HSP33 family. In terms of processing, under oxidizing conditions two disulfide bonds are formed involving the reactive cysteines. Under reducing conditions zinc is bound to the reactive cysteines and the protein is inactive.

The protein localises to the cytoplasm. Functionally, redox regulated molecular chaperone. Protects both thermally unfolding and oxidatively damaged proteins from irreversible aggregation. Plays an important role in the bacterial defense system toward oxidative stress. This chain is 33 kDa chaperonin, found in Shewanella denitrificans (strain OS217 / ATCC BAA-1090 / DSM 15013).